The following is a 372-amino-acid chain: tRNA-specific 2-thiouridylase MnmA (372 aa).

Residues 17–24 (GMSGGVDS) and M43 each bind ATP. Residues 103-105 (NPD) form an interaction with target base in tRNA region. Catalysis depends on C108, which acts as the Nucleophile. C108 and C207 are joined by a disulfide. G133 provides a ligand contact to ATP. Positions 157 to 159 (KDQ) are interaction with tRNA. C207 acts as the Cysteine persulfide intermediate in catalysis. The tract at residues 319 to 320 (RY) is interaction with tRNA.

Belongs to the MnmA/TRMU family.

The protein resides in the cytoplasm. The catalysed reaction is S-sulfanyl-L-cysteinyl-[protein] + uridine(34) in tRNA + AH2 + ATP = 2-thiouridine(34) in tRNA + L-cysteinyl-[protein] + A + AMP + diphosphate + H(+). Catalyzes the 2-thiolation of uridine at the wobble position (U34) of tRNA, leading to the formation of s(2)U34. In Vibrio cholerae serotype O1 (strain ATCC 39541 / Classical Ogawa 395 / O395), this protein is tRNA-specific 2-thiouridylase MnmA.